The following is a 155-amino-acid chain: SsrA-binding protein (155 aa).

A compositionally biased stretch (basic and acidic residues) spans 135–147 (TIKRRDQERDIKK). The disordered stretch occupies residues 135 to 155 (TIKRRDQERDIKKQMKHYNAR).

Belongs to the SmpB family.

It is found in the cytoplasm. Its function is as follows. Required for rescue of stalled ribosomes mediated by trans-translation. Binds to transfer-messenger RNA (tmRNA), required for stable association of tmRNA with ribosomes. tmRNA and SmpB together mimic tRNA shape, replacing the anticodon stem-loop with SmpB. tmRNA is encoded by the ssrA gene; the 2 termini fold to resemble tRNA(Ala) and it encodes a 'tag peptide', a short internal open reading frame. During trans-translation Ala-aminoacylated tmRNA acts like a tRNA, entering the A-site of stalled ribosomes, displacing the stalled mRNA. The ribosome then switches to translate the ORF on the tmRNA; the nascent peptide is terminated with the 'tag peptide' encoded by the tmRNA and targeted for degradation. The ribosome is freed to recommence translation, which seems to be the essential function of trans-translation. The sequence is that of SsrA-binding protein from Streptococcus pyogenes serotype M12 (strain MGAS2096).